Consider the following 307-residue polypeptide: Oxygen-dependent coproporphyrinogen-III oxidase (307 aa).

Serine 97 contributes to the substrate binding site. 2 residues coordinate a divalent metal cation: histidine 101 and histidine 111. Histidine 111 functions as the Proton donor in the catalytic mechanism. Residue 113–115 (NVR) coordinates substrate. 2 residues coordinate a divalent metal cation: histidine 152 and histidine 182. Positions 247–282 (YVEFNLVWDRGTHFGLQSGGRTESILMSMPPLASWS) are important for dimerization. A substrate-binding site is contributed by 265–267 (GGR).

It belongs to the aerobic coproporphyrinogen-III oxidase family. As to quaternary structure, homodimer. It depends on a divalent metal cation as a cofactor.

Its subcellular location is the cytoplasm. It carries out the reaction coproporphyrinogen III + O2 + 2 H(+) = protoporphyrinogen IX + 2 CO2 + 2 H2O. Its pathway is porphyrin-containing compound metabolism; protoporphyrin-IX biosynthesis; protoporphyrinogen-IX from coproporphyrinogen-III (O2 route): step 1/1. In terms of biological role, involved in the heme biosynthesis. Catalyzes the aerobic oxidative decarboxylation of propionate groups of rings A and B of coproporphyrinogen-III to yield the vinyl groups in protoporphyrinogen-IX. The polypeptide is Oxygen-dependent coproporphyrinogen-III oxidase (Polaromonas naphthalenivorans (strain CJ2)).